We begin with the raw amino-acid sequence, 663 residues long: Protein-arginine deiminase type-4 (663 aa).

Positions 153, 155, 157, 165, 168, 170, 176, and 179 each coordinate Ca(2+). A citrulline mark is found at Arg205, Arg212, and Arg218. Position 349 (Gln349) interacts with Ca(2+). Residue Asp350 is part of the active site. 4 residues coordinate Ca(2+): Glu351, Glu353, Asp369, and Ser370. At Arg372 the chain carries Citrulline. Position 373 (Asn373) interacts with Ca(2+). Residues Arg374 and Arg383 each carry the citrulline modification. Arg374 contributes to the substrate binding site. Ca(2+)-binding residues include Asp388, Phe407, Leu410, and Glu411. Catalysis depends on residues His471 and Asp473. Arg639 provides a ligand contact to substrate. Cys645 is an active-site residue.

Belongs to the protein arginine deiminase family. The cofactor is Ca(2+). In terms of processing, autocitrullination at Arg-372 and Arg-374 inactivates the enzyme. As to expression, expressed in eosinophils and neutrophils, not expressed in peripheral monocytes or lymphocytes.

Its subcellular location is the cytoplasm. It is found in the nucleus. The protein resides in the cytoplasmic granule. The catalysed reaction is L-arginyl-[protein] + H2O = L-citrullyl-[protein] + NH4(+). With respect to regulation, strongly Inhibited by F-amidine and N-alpha-benzoyl-N5-(2-chloro-1-iminoethyl)-L-ornithine amide (Cl-amidine). These inhibitors are however not specific to PADI4 and also inhibit other members of the family. Incorporation of a carboxylate ortho to the backbone amide of Cl-amidine results in inhibitors with increased specificity for PADI4: N-alpha-(2-carboxyl)benzoyl-N(5)-(2-fluoro-1-iminoethyl)-L-ornithine amide (o-F-amidine) and N-alpha-(2-carboxyl)benzoyl-N(5)-(2-chloro-1-iminoethyl)-L-ornithine amide (o-Cl-amidine). Strongly and specifically inhibited by Thr-Asp-F-amidine (TDFA); other members of the family are not inhibited. Its function is as follows. Catalyzes the citrullination/deimination of arginine residues of proteins such as histones, thereby playing a key role in histone code and regulation of stem cell maintenance. Citrullinates histone H1 at 'Arg-54' (to form H1R54ci), histone H3 at 'Arg-2', 'Arg-8', 'Arg-17' and/or 'Arg-26' (to form H3R2ci, H3R8ci, H3R17ci, H3R26ci, respectively) and histone H4 at 'Arg-3' (to form H4R3ci). Acts as a key regulator of stem cell maintenance by mediating citrullination of histone H1: citrullination of 'Arg-54' of histone H1 (H1R54ci) results in H1 displacement from chromatin and global chromatin decondensation, thereby promoting pluripotency and stem cell maintenance. Promotes profound chromatin decondensation during the innate immune response to infection in neutrophils by mediating formation of H1R54ci. Required for the formation of neutrophil extracellular traps (NETs); NETs are mainly composed of DNA fibers and are released by neutrophils to bind pathogens during inflammation. Citrullination of histone H3 prevents their methylation by CARM1 and HRMT1L2/PRMT1 and represses transcription. Citrullinates EP300/P300 at 'Arg-2142', which favors its interaction with NCOA2/GRIP1. This is Protein-arginine deiminase type-4 (PADI4) from Homo sapiens (Human).